The sequence spans 159 residues: Endoribonuclease YbeY (159 aa).

Zn(2+)-binding residues include His-120, His-124, and His-130.

It belongs to the endoribonuclease YbeY family. Requires Zn(2+) as cofactor.

Its subcellular location is the cytoplasm. Functionally, single strand-specific metallo-endoribonuclease involved in late-stage 70S ribosome quality control and in maturation of the 3' terminus of the 16S rRNA. The chain is Endoribonuclease YbeY from Parafrankia sp. (strain EAN1pec).